Consider the following 320-residue polypeptide: Malate dehydrogenase (320 aa).

Residues 8–13 and Asp-33 each bind NAD(+); that span reads GAGQIG. Residues Arg-82 and Arg-88 each contribute to the substrate site. Residues Asn-95 and 118–120 contribute to the NAD(+) site; that span reads ITN. The substrate site is built by Asn-120 and Arg-151. His-175 acts as the Proton acceptor in catalysis.

It belongs to the LDH/MDH superfamily. MDH type 3 family.

The catalysed reaction is (S)-malate + NAD(+) = oxaloacetate + NADH + H(+). Functionally, catalyzes the reversible oxidation of malate to oxaloacetate. This chain is Malate dehydrogenase, found in Pelagibacter ubique (strain HTCC1062).